Consider the following 702-residue polypeptide: Elongation factor G (702 aa).

In terms of domain architecture, tr-type G spans 8-290; the sequence is ERYRNIGISA…AVIEYLPAPT (283 aa). GTP-binding positions include 17 to 24, 88 to 92, and 142 to 145; these read AHIDAGKT, DTPGH, and NKMD.

This sequence belongs to the TRAFAC class translation factor GTPase superfamily. Classic translation factor GTPase family. EF-G/EF-2 subfamily.

It localises to the cytoplasm. Catalyzes the GTP-dependent ribosomal translocation step during translation elongation. During this step, the ribosome changes from the pre-translocational (PRE) to the post-translocational (POST) state as the newly formed A-site-bound peptidyl-tRNA and P-site-bound deacylated tRNA move to the P and E sites, respectively. Catalyzes the coordinated movement of the two tRNA molecules, the mRNA and conformational changes in the ribosome. This chain is Elongation factor G, found in Yersinia pseudotuberculosis serotype O:1b (strain IP 31758).